We begin with the raw amino-acid sequence, 148 residues long: MF7 protein (148 aa).

This is MF7 protein from Myxoma virus (strain Lausanne) (MYXV).